We begin with the raw amino-acid sequence, 338 residues long: Ferrochelatase (338 aa).

Histidine 189 and glutamate 294 together coordinate Fe cation.

Belongs to the ferrochelatase family.

It is found in the cytoplasm. The catalysed reaction is heme b + 2 H(+) = protoporphyrin IX + Fe(2+). The protein operates within porphyrin-containing compound metabolism; protoheme biosynthesis; protoheme from protoporphyrin-IX: step 1/1. Its function is as follows. Catalyzes the ferrous insertion into protoporphyrin IX. The protein is Ferrochelatase of Pseudomonas putida (strain ATCC 700007 / DSM 6899 / JCM 31910 / BCRC 17059 / LMG 24140 / F1).